The following is a 262-amino-acid chain: Type III pantothenate kinase (262 aa).

Residue 9-16 (DIGNTNIV) participates in ATP binding. Substrate contacts are provided by residues Tyr-103 and 110 to 113 (GVDR). Catalysis depends on Asp-112, which acts as the Proton acceptor. Asp-132 contacts K(+). Thr-135 is a binding site for ATP. Residue Thr-187 coordinates substrate.

It belongs to the type III pantothenate kinase family. As to quaternary structure, homodimer. Requires NH4(+) as cofactor. K(+) serves as cofactor.

The protein localises to the cytoplasm. The catalysed reaction is (R)-pantothenate + ATP = (R)-4'-phosphopantothenate + ADP + H(+). The protein operates within cofactor biosynthesis; coenzyme A biosynthesis; CoA from (R)-pantothenate: step 1/5. Functionally, catalyzes the phosphorylation of pantothenate (Pan), the first step in CoA biosynthesis. The polypeptide is Type III pantothenate kinase (Finegoldia magna (strain ATCC 29328 / DSM 20472 / WAL 2508) (Peptostreptococcus magnus)).